Here is a 242-residue protein sequence, read N- to C-terminus: Probable transcriptional regulatory protein HEAR0561 (242 aa).

Belongs to the TACO1 family.

The protein resides in the cytoplasm. The polypeptide is Probable transcriptional regulatory protein HEAR0561 (Herminiimonas arsenicoxydans).